The following is a 391-amino-acid chain: Elongation factor Tu (391 aa).

Residues 10–201 form the tr-type G domain; it reads KPHVNIGTIG…AVDDYIPTPE (192 aa). The G1 stretch occupies residues 19–26; the sequence is GHVDHGKT. 19–26 is a binding site for GTP; sequence GHVDHGKT. Thr26 is a Mg(2+) binding site. The interval 55–59 is G2; the sequence is GITIS. Positions 76 to 79 are G3; the sequence is DCPG. GTP-binding positions include 76–80 and 131–134; these read DCPGH and NKVD. The interval 131–134 is G4; it reads NKVD. The tract at residues 169-171 is G5; that stretch reads SAL.

This sequence belongs to the TRAFAC class translation factor GTPase superfamily. Classic translation factor GTPase family. EF-Tu/EF-1A subfamily. As to quaternary structure, monomer.

The protein resides in the cytoplasm. It carries out the reaction GTP + H2O = GDP + phosphate + H(+). Its function is as follows. GTP hydrolase that promotes the GTP-dependent binding of aminoacyl-tRNA to the A-site of ribosomes during protein biosynthesis. In Paracoccus denitrificans (strain Pd 1222), this protein is Elongation factor Tu.